We begin with the raw amino-acid sequence, 346 residues long: Fusaric acid resistance protein FusC (346 aa).

Helical transmembrane passes span 10–30, 248–268, 291–311, and 315–335; these read VIIG…RYTG, VILA…VMLV, MGMG…GIYP, and GFVL…YMSL.

Belongs to the aromatic acid exporter ArAE (TC 2.A.85) family.

It localises to the cell membrane. Functionally, involved in the resistance (detoxification) of the fungal toxin fusaric acid. This is Fusaric acid resistance protein FusC (fusC) from Burkholderia cepacia (Pseudomonas cepacia).